The primary structure comprises 437 residues: Trigger factor (437 aa).

Positions Gly163–Pro248 constitute a PPIase FKBP-type domain.

It belongs to the FKBP-type PPIase family. Tig subfamily.

It localises to the cytoplasm. It carries out the reaction [protein]-peptidylproline (omega=180) = [protein]-peptidylproline (omega=0). Involved in protein export. Acts as a chaperone by maintaining the newly synthesized protein in an open conformation. Functions as a peptidyl-prolyl cis-trans isomerase. The chain is Trigger factor from Pelobacter propionicus (strain DSM 2379 / NBRC 103807 / OttBd1).